Reading from the N-terminus, the 599-residue chain is UvrABC system protein C (599 aa).

Positions 18–96 (QLPGVYRMLG…IKQHRPPYNI (79 aa)) constitute a GIY-YIG domain. The 36-residue stretch at 207–242 (KELNQELIAKMEEAAEQLAFEKAMFYRDRLGLLREV) folds into the UVR domain.

It belongs to the UvrC family. Interacts with UvrB in an incision complex.

It is found in the cytoplasm. The UvrABC repair system catalyzes the recognition and processing of DNA lesions. UvrC both incises the 5' and 3' sides of the lesion. The N-terminal half is responsible for the 3' incision and the C-terminal half is responsible for the 5' incision. This chain is UvrABC system protein C, found in Acinetobacter baylyi (strain ATCC 33305 / BD413 / ADP1).